Here is a 512-residue protein sequence, read N- to C-terminus: Methionine--tRNA ligase (512 aa).

Residues 11 to 21 (YYASGKPHIGH) carry the 'HIGH' region motif. Zn(2+)-binding residues include cysteine 126, cysteine 129, cysteine 143, and histidine 147. Positions 301–305 (KMSKS) match the 'KMSKS' region motif. Lysine 304 contributes to the ATP binding site.

This sequence belongs to the class-I aminoacyl-tRNA synthetase family. MetG type 2A subfamily. As to quaternary structure, monomer. Requires Zn(2+) as cofactor.

The protein resides in the cytoplasm. It catalyses the reaction tRNA(Met) + L-methionine + ATP = L-methionyl-tRNA(Met) + AMP + diphosphate. Functionally, is required not only for elongation of protein synthesis but also for the initiation of all mRNA translation through initiator tRNA(fMet) aminoacylation. The polypeptide is Methionine--tRNA ligase (metG) (Mycoplasma pneumoniae (strain ATCC 29342 / M129 / Subtype 1) (Mycoplasmoides pneumoniae)).